We begin with the raw amino-acid sequence, 195 residues long: Translation initiation factor IF-3 (195 aa).

The tract at residues 158-195 is disordered; that stretch reads EQSEVQQRPKREGRNMIMFLSPRKTPLIKKEEDAKENN. The span at 185-195 shows a compositional bias: basic and acidic residues; it reads IKKEEDAKENN.

It belongs to the IF-3 family. In terms of assembly, monomer.

Its subcellular location is the cytoplasm. In terms of biological role, IF-3 binds to the 30S ribosomal subunit and shifts the equilibrium between 70S ribosomes and their 50S and 30S subunits in favor of the free subunits, thus enhancing the availability of 30S subunits on which protein synthesis initiation begins. The polypeptide is Translation initiation factor IF-3 (Prochlorococcus marinus (strain MIT 9515)).